A 452-amino-acid polypeptide reads, in one-letter code: tRNA modification GTPase MnmE (452 aa).

The (6S)-5-formyl-5,6,7,8-tetrahydrofolate site is built by Arg-28, Glu-85, and Lys-124. The TrmE-type G domain occupies 220-378 (GMNVVLVGRP…LRTELLRAAG (159 aa)). Position 230 (Asn-230) interacts with K(+). GTP-binding positions include 230–235 (NVGKSS), 249–255 (TDVAGTT), 274–277 (DTAG), and 359–361 (SAR). Ser-234 contributes to the Mg(2+) binding site. The K(+) site is built by Thr-249, Val-251, and Thr-254. Thr-255 contacts Mg(2+). Lys-452 serves as a coordination point for (6S)-5-formyl-5,6,7,8-tetrahydrofolate.

It belongs to the TRAFAC class TrmE-Era-EngA-EngB-Septin-like GTPase superfamily. TrmE GTPase family. Homodimer. Heterotetramer of two MnmE and two MnmG subunits. K(+) is required as a cofactor.

It localises to the cytoplasm. In terms of biological role, exhibits a very high intrinsic GTPase hydrolysis rate. Involved in the addition of a carboxymethylaminomethyl (cmnm) group at the wobble position (U34) of certain tRNAs, forming tRNA-cmnm(5)s(2)U34. In Azoarcus sp. (strain BH72), this protein is tRNA modification GTPase MnmE.